The primary structure comprises 251 residues: 3-deoxy-manno-octulosonate cytidylyltransferase (251 aa).

The protein belongs to the KdsB family.

It is found in the cytoplasm. The catalysed reaction is 3-deoxy-alpha-D-manno-oct-2-ulosonate + CTP = CMP-3-deoxy-beta-D-manno-octulosonate + diphosphate. The protein operates within nucleotide-sugar biosynthesis; CMP-3-deoxy-D-manno-octulosonate biosynthesis; CMP-3-deoxy-D-manno-octulosonate from 3-deoxy-D-manno-octulosonate and CTP: step 1/1. It participates in bacterial outer membrane biogenesis; lipopolysaccharide biosynthesis. Functionally, activates KDO (a required 8-carbon sugar) for incorporation into bacterial lipopolysaccharide in Gram-negative bacteria. The sequence is that of 3-deoxy-manno-octulosonate cytidylyltransferase from Alcanivorax borkumensis (strain ATCC 700651 / DSM 11573 / NCIMB 13689 / SK2).